The primary structure comprises 549 residues: Cobalt-dependent inorganic pyrophosphatase (549 aa).

CBS domains follow at residues 74-130 (EMDK…IWDS) and 252-310 (MTKD…VIQV). AMP contacts are provided by residues Lys100, 116–119 (STSN), Thr253, Val258, and 278–280 (YSN).

The protein belongs to the PPase family. In terms of assembly, homodimer. Co(2+) serves as cofactor. Requires Mn(2+) as cofactor. It depends on Mg(2+) as a cofactor.

The catalysed reaction is diphosphate + H2O = 2 phosphate + H(+). Inhibited by AMP and ADP with 25% and 35% of activity remaining, respectively, at saturating conditions. Activated 5-fold by diadenosine polyphosphates(Ap[n]A) with n&gt;2 (Ap3A, Ap4A, Ap5A, Ap6A) at saturating conditions. The chain is Cobalt-dependent inorganic pyrophosphatase from Clostridium perfringens (strain 13 / Type A).